Here is a 291-residue protein sequence, read N- to C-terminus: ATP synthase gamma chain (291 aa).

The protein belongs to the ATPase gamma chain family. As to quaternary structure, F-type ATPases have 2 components, CF(1) - the catalytic core - and CF(0) - the membrane proton channel. CF(1) has five subunits: alpha(3), beta(3), gamma(1), delta(1), epsilon(1). CF(0) has three main subunits: a, b and c.

The protein localises to the cell inner membrane. Functionally, produces ATP from ADP in the presence of a proton gradient across the membrane. The gamma chain is believed to be important in regulating ATPase activity and the flow of protons through the CF(0) complex. This Burkholderia multivorans (strain ATCC 17616 / 249) protein is ATP synthase gamma chain.